The primary structure comprises 430 residues: MISKSIILRFSELSMRKKATLVGLPLLAVAAISSSLNSPTRQQRIELSLPESPLVQFSSAEHTVEVVKVGHPDYEYEIKPGDNLSTIFNQLGFAYTELMKVMETDLNYLALDTLRPGNVLRFWKGSDNTLAKMELEFSLVDRAVYTRLNDGSYEFEERKIPGTWKVEPLIGEVDGSFSLSANRAGLGAADVDQIVTLLKDKINFGRDLRRGDRFEVVLSRQLVGEKLTGNSEIQAIKIFNRGKEITAYLHQDGQYYDKNGDSLQRAFQRYPVDSKWRISSNFDPRRLHPVTKRVAPHNGTDFAMPIGTPVYTSGDGVVVMTRNHPYAGNYVVIQHGNTYMTRYLHLSKILVKKGQKVSRGQRIGLSGNTGRVTGPHLHYELIVRGRPVNAMKANIPMASSVPKKEMAQFIAKRKELDQMLARQESMLAAQ.

The N-terminal stretch at 1–35 is a signal peptide; it reads MISKSIILRFSELSMRKKATLVGLPLLAVAAISSS. Residues His297, Asp301, and His378 each contribute to the Zn(2+) site.

It belongs to the peptidase M23B family. Zn(2+) serves as cofactor.

It localises to the periplasm. The protein operates within cell wall degradation; peptidoglycan degradation. Its activity is regulated as follows. Reduced activity in 0.5 mM EDTA and a complete loss of activity at higher EDTA concentrations. The effect of EDTA can be reversed by addition of 1 mM ZnCl(2). Conformational switching between open (catalytically active) and closed (catalytically inactive) conformation of this protein is suggested mechanism of its regulation. The signal or inducer of the conformational shift to the open form unmasking the active site is currently not understood. Cell wall peptidoglycan (PG) DD-endopeptidase essential for cell growth and elongation. Hydrolyzes peptide cross-links which covalently connect adjacent PG strands probably to allow insertion of new glycans and thus cell wall expansion. Degrades purified whole PG sacculi in vitro. Releases predominantly short glycan chains from the PG. Cleaves D,D cross-linked muropeptides specifically preferring dimeric tetrapeptide-tetrapeptide (D44) substrates and has only little activity on dimeric tetrapeptide-pentapeptide (D45) substrates. Also converts more than 50% of tetrapeptide-tripeptide (D43) to product as well as more than 50% of D43M, which contains D-Met instead of D-Ala in the fourth position of the acceptor moiety. Cleaves the D,D bond between diaminopimelic acid (DAP) and D-Ala of the PG substrate in vitro. No cleavage of L,D bond connecting two DAP moieties. The chain is Peptidoglycan DD-endopeptidase ShyA from Vibrio cholerae serotype O1 (strain ATCC 39315 / El Tor Inaba N16961).